The primary structure comprises 594 residues: MAVEELQSIIKRCQILEEQDFKEEDFGLFQLAGQRCIEEGHTDQLLEIIQNEKNKVIIKNMGWNLVGPVVRCLLCKDKEDSKRKVYFLIFDLLVKLCNPKELLLGLLELIEEPSGKQISQSILLLLQPLQTVIQKLHNKAYSIGLALSTLWNQLSLLPVPYSKEQIQMDDYGLCQCCKALIEFTKPFVEEVIDNKENSLENEKLKDELLKFCFKSLKCPLLTAQFFEQSEEGGNDPFRYFASEIIGFLSAIGHPFPKMIFNHGRKKRTWNYLEFEEEENKQLADSMASLAYLVFVQGIHIDQLPMVLSPLYLLQFNMGHIEVFLQRTEESVISKGLELLENSLLRIEDNSLLYQYLEIKSFLTVPQGLVKVMTLCPIETLRKKSLAMLQLYINKLDSQGKYTLFRCLLNTSNHSGVEAFIIQNIKNQIDMSLKRTRNNKWFTGPQLISLLDLVLFLPEGAETDLLQNSDRIMASLNLLRYLVIKDNENDNQTGLWTELGNIENNFLKPLHIGLNMSKAHYEAEIKNSQEAQKSKDLCSITVSGEEIPNMPPEMQLKVLHSALFTFDLIESVLARVEELIEIKTKSTSEENIGIK.

Ala2 is modified (N-acetylalanine). An alpha-helical region with structural similarity to HEAT repeats region spans residues 2–553 (AVEELQSIIK…EEIPNMPPEM (552 aa)). Residues 300–594 (IDQLPMVLSP…STSEENIGIK (295 aa)) form an important for interaction with RBX1 region.

In terms of assembly, interacts with FKBP4 and FKBP1A. Isoform 1: Interacts with RBX1 (via RING domain). Identified in complexes that contain RBX1 plus one of the cullins CUL1, CUL2, CUL3, and CUL4A. Identified in a SCF complex composed of CUL1, RBX1, SKP1, FBXW7 and GLMN. Component of a SCF-like complex consisting of CUL7, RBX1, SKP1, FBXW8 and GLMN. Interacts with unphosphorylated MET and is released upon MET phosphorylation. Phosphorylated on tyrosine residues. In terms of tissue distribution, ubiquitous.

In terms of biological role, regulatory component of cullin-RING-based SCF (SKP1-Cullin-F-box protein) E3 ubiquitin-protein ligase complexes. Inhibits E3 ubiquitin ligase activity by binding to RBX1 (via RING domain) and inhibiting its interaction with the E2 ubiquitin-conjugating enzyme CDC34. Inhibits RBX1-mediated neddylation of CUL1. Required for normal stability and normal cellular levels of key components of SCF ubiquitin ligase complexes, including FBXW7, RBX1, CUL1, CUL2, CUL3, CUL4A, and thereby contributes to the regulation of CCNE1 and MYC levels. Essential for normal development of the vasculature. Contributes to the regulation of RPS6KB1 phosphorylation. This is Glomulin (GLMN) from Homo sapiens (Human).